Here is a 700-residue protein sequence, read N- to C-terminus: DNA ligase (700 aa).

NAD(+)-binding positions include 42 to 46, 91 to 92, and glutamate 126; these read DDEYD and SL. Lysine 128 serves as the catalytic N6-AMP-lysine intermediate. NAD(+) contacts are provided by arginine 149, glutamate 184, lysine 300, and lysine 324. Zn(2+)-binding residues include cysteine 418, cysteine 421, cysteine 436, and cysteine 441. The region spanning 598–686 is the BRCT domain; sequence TRTDQLSGLN…GLGERGVAED (89 aa).

Belongs to the NAD-dependent DNA ligase family. LigA subfamily. The cofactor is Mn(2+).

It catalyses the reaction NAD(+) + (deoxyribonucleotide)n-3'-hydroxyl + 5'-phospho-(deoxyribonucleotide)m = (deoxyribonucleotide)n+m + AMP + beta-nicotinamide D-nucleotide.. In terms of biological role, DNA ligase that catalyzes the formation of phosphodiester linkages between 5'-phosphoryl and 3'-hydroxyl groups in double-stranded DNA using NAD as a coenzyme and as the energy source for the reaction. It is essential for DNA replication and repair of damaged DNA. This is DNA ligase from Deinococcus radiodurans (strain ATCC 13939 / DSM 20539 / JCM 16871 / CCUG 27074 / LMG 4051 / NBRC 15346 / NCIMB 9279 / VKM B-1422 / R1).